Consider the following 123-residue polypeptide: Small ribosomal subunit protein uS12 (123 aa).

The protein belongs to the universal ribosomal protein uS12 family. Part of the 30S ribosomal subunit. Contacts proteins S8 and S17. May interact with IF1 in the 30S initiation complex.

Its function is as follows. With S4 and S5 plays an important role in translational accuracy. Interacts with and stabilizes bases of the 16S rRNA that are involved in tRNA selection in the A site and with the mRNA backbone. Located at the interface of the 30S and 50S subunits, it traverses the body of the 30S subunit contacting proteins on the other side and probably holding the rRNA structure together. The combined cluster of proteins S8, S12 and S17 appears to hold together the shoulder and platform of the 30S subunit. This is Small ribosomal subunit protein uS12 from Corynebacterium diphtheriae (strain ATCC 700971 / NCTC 13129 / Biotype gravis).